A 250-amino-acid polypeptide reads, in one-letter code: MSVLVGLHGEAGSGKDTVAKLIIDWCNDTYPTCLSRRYSFAKPVYELASVILGVTPEFLGERRGKEIDQWFTVTQSQLERARDVWFKYGIDKFEDFSYVWPIFEEKYLNPQQLISENKEDGLYSLFISPRKMLQLVGTELGRQLVHERIWLIILEQSIAKDDPDVAVITDVRFPNEGELLRETNHLDMDSLLVNVVPAEQKFTIKSDHPSESGIPAKYITHELVNKFDGINNLKLEVYNFCDLELEPLVG.

Residues Gly14, Asp16, and Thr17 each contribute to the ATP site. DGMP is bound by residues Val44, Lys65, Arg130, Gly137, Thr138, Trp150, Asp170, Arg172, Glu176, and Ser210.

Belongs to the dNMP kinase family. Monomer.

The enzyme catalyses a 2'-deoxyribonucleoside 5'-phosphate + ATP = a 2'-deoxyribonucleoside 5'-diphosphate + ADP. Its function is as follows. Allows the synthesis of deoxyribonucleoside triphosphates necessary for the rapid viral DNA replication. Phosphorylates all four dNMPs. The enzyme had the highest activity with dAMP and had about 30% less activity with dTMP and dGMP, respectively. The lowest activity was observed with dCMP as the substrate (about 35% of that with dAMP). In Escherichia coli (Enterobacteria phage T5), this protein is Deoxynucleoside-5'-monophosphate kinase.